The primary structure comprises 406 residues: 12S rRNA N(4)-cytidine methyltransferase METTL15 (406 aa).

The transit peptide at 1–22 directs the protein to the mitochondrion; it reads MLRYPYFYRTYNRLFSHFVDSG. Residues 100 to 102, aspartate 119, phenylalanine 146, aspartate 169, and glutamine 176 each bind S-adenosyl-L-methionine; that span reads GGH. A Phosphoserine modification is found at serine 358.

The protein belongs to the methyltransferase superfamily. RsmH family.

The protein resides in the mitochondrion matrix. The catalysed reaction is cytidine(839) in 12S rRNA + S-adenosyl-L-methionine = N(4)-methylcytidine(839) in 12S rRNA + S-adenosyl-L-homocysteine + H(+). In terms of biological role, N4-methylcytidine (m4C) methyltransferase responsible for the methylation of position C839 in mitochondrial 12S rRNA. Involved in the stabilization of 12S rRNA folding, therefore facilitating the assembly of the mitochondrial small ribosomal subunits. In Mus musculus (Mouse), this protein is 12S rRNA N(4)-cytidine methyltransferase METTL15.